Consider the following 923-residue polypeptide: Calmodulin-binding transcription activator 5 (923 aa).

Positions 25–151 (IQTMLDEAYS…YRETHEVHAA (127 aa)) form a DNA-binding region, CG-1. Residues 272–372 (VYQNNNSCGA…HSHSDIPEQV (101 aa)) form a transcription activation region. Residues 611 to 640 (QGWTALHWAAYYGREKMVAALLSAGARPNL) form an ANK repeat. 3 IQ domains span residues 757 to 786 (NIIA…IQYR), 799 to 828 (MRKK…SVGV), and 875 to 904 (LERS…AHEE). The interval 824 to 846 (WSVGVLEKAILRWRLKRKGFRGL) is calmodulin-binding. A coiled-coil region spans residues 887–914 (RSKKAQQDYRRMKLAHEEAQLEYDGMQE).

The protein belongs to the CAMTA family. In terms of tissue distribution, expressed in roots, stems, leaves, pollen, top of sepals and siliques.

It localises to the nucleus. In terms of biological role, transcription activator. Binds to the DNA consensus sequence 5'-[ACG]CGCG[GTC]-3'. Regulates transcriptional activity in response to calcium signals. Binds calmodulin in a calcium-dependent manner. Involved in response to cold. Contributes together with CAMTA3 to the positive regulation of the cold-induced expression of DREB1A/CBF3, DREB1B/CBF1 and DREB1C/CBF2. The chain is Calmodulin-binding transcription activator 5 from Arabidopsis thaliana (Mouse-ear cress).